Here is an 83-residue protein sequence, read N- to C-terminus: Mitochondrial import inner membrane translocase subunit Tim8 B (83 aa).

At Ala-2 the chain carries N-acetylalanine. Residues 36-59 (CWDKCVEKPGNRLDSRTENCLSSC) carry the Twin CX3C motif motif. 2 cysteine pairs are disulfide-bonded: Cys-36–Cys-59 and Cys-40–Cys-55.

It belongs to the small Tim family. As to quaternary structure, heterohexamer; possibly composed of 3 copies of TIMM8B and 3 copies of TIMM13, named soluble 70 kDa complex. Associates with the TIM22 complex, whose core is composed of TIMM22.

The protein localises to the mitochondrion inner membrane. Functionally, probable mitochondrial intermembrane chaperone that participates in the import and insertion of some multi-pass transmembrane proteins into the mitochondrial inner membrane. Also required for the transfer of beta-barrel precursors from the TOM complex to the sorting and assembly machinery (SAM complex) of the outer membrane. Acts as a chaperone-like protein that protects the hydrophobic precursors from aggregation and guide them through the mitochondrial intermembrane space. This Bos taurus (Bovine) protein is Mitochondrial import inner membrane translocase subunit Tim8 B (TIMM8B).